Consider the following 137-residue polypeptide: Large ribosomal subunit protein uL16 (137 aa).

The protein belongs to the universal ribosomal protein uL16 family. As to quaternary structure, part of the 50S ribosomal subunit.

Binds 23S rRNA and is also seen to make contacts with the A and possibly P site tRNAs. The polypeptide is Large ribosomal subunit protein uL16 (Stenotrophomonas maltophilia (strain R551-3)).